The primary structure comprises 207 residues: Lipid A acyltransferase PagP (207 aa).

The first 24 residues, 1-24 (MKFDLTAACTLSATLLVSSGTVFA), serve as a signal peptide directing secretion. Residues H79, D122, and S123 contribute to the active site.

The protein belongs to the lipid A palmitoyltransferase family. In terms of assembly, homodimer.

The protein localises to the cell outer membrane. The catalysed reaction is a lipid A + a 1,2-diacyl-sn-glycero-3-phosphocholine = a hepta-acyl lipid A + a 2-acyl-sn-glycero-3-phosphocholine. It catalyses the reaction a lipid IVA + a 1,2-diacyl-sn-glycero-3-phosphocholine = a lipid IVB + a 2-acyl-sn-glycero-3-phosphocholine. It carries out the reaction a lipid IIA + a 1,2-diacyl-sn-glycero-3-phosphocholine = a lipid IIB + a 2-acyl-sn-glycero-3-phosphocholine. Functionally, transfers a fatty acid residue from the sn-1 position of a phospholipid to the N-linked hydroxyfatty acid chain on the proximal unit of lipid A or its precursors. The chain is Lipid A acyltransferase PagP from Photorhabdus laumondii subsp. laumondii (strain DSM 15139 / CIP 105565 / TT01) (Photorhabdus luminescens subsp. laumondii).